The following is a 247-amino-acid chain: MSCAGEALAPGPAEQQCPVEAGGGRLGSPAHEACNEDNTEKDKRPATSGHTRCGLMRDQSIWPNPSAGELVRTQPERLPQLQTSAQEPGKEETGKIKNGGHTRMSNGNGIPHGAKHVSVENHKISAPVSQKMHRKIQSSLSVNNDISKKSKVNAVFSPKAASSPEDCCVHCILACLFCEFLTLCNIVLGQASCGICTSEACCCCCGDEMGDDCSCPCDMDCGIMDACCESSDCLEICMECCGICFPS.

2 disordered regions span residues 1-67 and 80-110; these read MSCA…NPSA and QLQTSAQEPGKEETGKIKNGGHTRMSNGNGI. The region spanning 74–247 is the MDFI domain; that stretch reads QPERLPQLQT…MECCGICFPS (174 aa). 2 positions are modified to phosphoserine: serine 129 and serine 141.

This sequence belongs to the MDFI family. Interacts with HAND1; the interaction sequesters Hand1 into the nucleolus and inhibits its activity. Interacts (via C-terminus) with ZIC2. Interacts (via C-terminus) with AXIN1, the histidine-rich region of CCNT1/cyclin-T and weakly with LEF1. Interacts with CCNT2. Interacts with GATA2. Interacts (via C-terminus) with Piezo channel composed of PIEZO1 or PIEZO2; the interaction prolongs Piezo channel inactivation. Palmitoylated. As to expression, in the embryo, robust expression is detected between 16.5 and 18.5 dpc in lung, kidney, and salivary glands. In the developing cardiovascular system, it is detected in lymphatic and cardiac valves (at protein level).

It is found in the cytoplasm. The protein resides in the secreted. Its function is as follows. Required to control the activity of various transcription factors through their sequestration in the cytoplasm. Retains nuclear Zic proteins ZIC1, ZIC2 and ZIC3 in the cytoplasm and inhibits their transcriptional activation. Modulates the expression from cellular promoters. Binds to the axin complex, resulting in an increase in the level of free beta-catenin. Affects axin-regulation of the WNT and JNK signaling pathways. Involved in the development of lymphatic vessel valves. Required to promote lymphatic endothelial cell migration, in a process that involves down-regulation of integrin beta 1 activation and control of cell adhesion to the extracellular matrix. Regulates the activity of mechanosensitive Piezo channel. This is MyoD family inhibitor domain-containing protein from Mus musculus (Mouse).